The sequence spans 408 residues: Glycoprotein 55 (408 aa).

Residues 1–32 form the signal peptide; that stretch reads MEGPAFSKPLKDKINPWGPLIILGILIRAGVS. Residues 33–385 are Virion surface-facing; it reads VQHDSPHQVF…LFNRSTWFTT (353 aa). Residues asparagine 43 and asparagine 58 are each glycosylated (N-linked (GlcNAc...) asparagine; by host). The interval 256–281 is disordered; sequence RPPQPPPPGAASIVPETAPPSQQPGT. N-linked (GlcNAc...) asparagine; by host glycans are attached at residues asparagine 297 and asparagine 329. A coiled-coil region spans residues 335–371; it reads KEECCFYADHTGLVRDSMAKLRERLTQRQKLFESSQG. An N-linked (GlcNAc...) asparagine; by host glycan is attached at asparagine 378. A helical transmembrane segment spans residues 386–406; that stretch reads LIFTIIGPLIILLLILLFWTL. Residues 407 to 408 lie on the Intravirion side of the membrane; the sequence is HS.

The protein resides in the host endoplasmic reticulum membrane. Its subcellular location is the host cell membrane. It localises to the virion membrane. Functionally, envelope-like membrane glycoprotein. The protein is Glycoprotein 55 (env) of Mus musculus (Mouse).